A 272-amino-acid polypeptide reads, in one-letter code: Type III pantothenate kinase (272 aa).

6 to 13 (DVRNTHTV) is a binding site for ATP. 109 to 112 (GADR) is a binding site for substrate. Residue Asp-111 is the Proton acceptor of the active site. Asp-131 is a K(+) binding site. Ser-134 is a binding site for ATP. Residue Thr-186 coordinates substrate.

It belongs to the type III pantothenate kinase family. In terms of assembly, homodimer. It depends on NH4(+) as a cofactor. K(+) serves as cofactor.

The protein resides in the cytoplasm. It catalyses the reaction (R)-pantothenate + ATP = (R)-4'-phosphopantothenate + ADP + H(+). The protein operates within cofactor biosynthesis; coenzyme A biosynthesis; CoA from (R)-pantothenate: step 1/5. Functionally, catalyzes the phosphorylation of pantothenate (Pan), the first step in CoA biosynthesis. The sequence is that of Type III pantothenate kinase from Mycobacterium bovis (strain BCG / Pasteur 1173P2).